We begin with the raw amino-acid sequence, 507 residues long: Myocyte-specific enhancer factor 2D (507 aa).

The MADS-box domain occupies 3–57 (RKKIQIQRITDERNRQVTFTKRKFGLMKKAYELSVLCDCEIALIIFNHSNKLFQY). Positions 58–86 (ASTDMDKVLLKYTEYNEPHESRTNADIIE) form a DNA-binding region, mef2-type. Phosphoserine occurs at positions 98, 106, 110, 121, and 180. The interval 174 to 207 (TDPRLLSPQQPALQRNSVSPGLPQRPASAGAMLG) is disordered. Positions 180–192 (SPQQPALQRNSVS) are enriched in polar residues. Position 190 is a phosphoserine; by PKA (Ser190). At Ser231 the chain carries Phosphoserine. Disordered regions lie at residues 244 to 267 (NKVIPAKSPPPPTHNTQLGAPSRK), 357 to 392 (WQQPQQPQQPQPPQPPQSQPQPPQPQPQQPPQQQPH), and 423 to 507 (SIKS…WTLK). An N6-acetyllysine modification is found at Lys245. Residue Ser251 is modified to Phosphoserine. Pro residues predominate over residues 363–389 (PQQPQPPQPPQSQPQPPQPQPQQPPQQ). Lys425 carries the post-translational modification N6-acetyllysine; alternate. Residue Lys425 forms a Glycyl lysine isopeptide (Lys-Gly) (interchain with G-Cter in SUMO); alternate linkage. A Phosphoserine modification is found at Ser430.

Forms a complex with class II HDACs in undifferentiating cells. On myogenic differentiation, HDACs are released into the cytoplasm allowing MEF2s to interact with other proteins for activation. Interacts with HDAC4 (in undifferentiating cells); the interaction translocates MEF2D to nuclear dots. Forms a heterodimer with MEF2A. Interacts with MAPK7; the interaction phosphorylates but does not activate MEF2D. Interacts with MYOG. Interacts with CCAR2 and HDAC3. Post-translationally, phosphorylated on Ser-430 by CDK5 is required for Lys-425 sumoylation and inhibits transcriptional activity. In neurons, enhanced CDK5 activity induced by neurotoxins promotes caspase 3-mediated cleavage leading to neuron apoptosis. Phosphorylation on Ser-180 can be enhanced by EGF. Phosphorylated and activated by CaMK4. In terms of processing, acetylated on Lys-425 by CREBBP. Acetylated by EP300. Deacetylated by SIRT1 and HDAC3. Sumoylated on Lys-425 with SUMO2 but not SUMO1; which inhibits transcriptional activity and myogenic activity. Desumoylated by SENP3.

It localises to the nucleus. Transcriptional activator which binds specifically to the MEF2 element, 5'-YTA[AT](4)TAR-3', found in numerous muscle-specific, growth factor- and stress-induced genes. Mediates cellular functions not only in skeletal and cardiac muscle development, but also in neuronal differentiation and survival. Plays diverse roles in the control of cell growth, survival and apoptosis via p38 MAPK signaling in muscle-specific and/or growth factor-related transcription. Plays a critical role in the regulation of neuronal apoptosis. This chain is Myocyte-specific enhancer factor 2D (Mef2d), found in Rattus norvegicus (Rat).